The following is an 874-amino-acid chain: Collagen alpha-2(I) chain (874 aa).

The interval 1–874 is disordered; it reads SGGFDFSFLP…FGYEGDFYRA (874 aa). A 4-hydroxyproline mark is found at Pro10 and Pro13. Lys16 is subject to Allysine. The segment covering 27–66 has biased composition (low complexity); sequence LMGPRGPPGASGAPGPQGFQGPAGEPGEPGQTGPAGARGP. A 4-hydroxyproline mark is found at Pro34 and Pro40. Position 93 is a 5-hydroxylysine; alternate (Lys93). Lys93 carries an O-linked (Gal...) hydroxylysine; alternate glycan. Low complexity-rich tracts occupy residues 110–143, 188–209, and 218–236; these read ARGR…SAGP, PGAN…AGAP, and PGPV…AGSK. A compositionally biased stretch (gly residues) spans 237–246; the sequence is GESGGKGEPG. Residues 247–257 are compositionally biased toward low complexity; the sequence is SAGPQGPPGSS. Residues Pro317 and Pro320 each carry the 4-hydroxyproline modification. Low complexity-rich tracts occupy residues 346–365, 434–451, and 463–473; these read LPGI…RGEA, PGES…SRGP, and EPGVVGAPGTA. The span at 474-483 shows a compositional bias: gly residues; sequence GPAGSGGLPG. 2 stretches are compositionally biased toward low complexity: residues 491 to 538 and 545 to 565; these read RGEV…PRGS and VGPA…QPGA. Over residues 566 to 575 the composition is skewed to basic and acidic residues; it reads KGERGTKGPK. The span at 583-593 shows a compositional bias: low complexity; that stretch reads PTGPVGSAGPA. The segment covering 603 to 612 has biased composition (gly residues); the sequence is GSRGDGGPPG. Over residues 614–623 the composition is skewed to low complexity; sequence TGFPGAAGRT. The segment covering 648–662 has biased composition (gly residues); that stretch reads GPVGRGETGAGGPPG. Low complexity-rich tracts occupy residues 663–697 and 705–724; these read FTGE…LGLP and LPGV…AGPP. Positions 725–744 are enriched in gly residues; that stretch reads GARGDGNPGSDGPPGRGAAG. Composition is skewed to low complexity over residues 745 to 755 and 763 to 778; these read APGPHGTVGPA and EPGP…ALGP.

This sequence belongs to the fibrillar collagen family. Trimers of one alpha 2(I) and two alpha 1(I) chains. Interacts (via C-terminus) with TMEM131 (via PapD-L domain); the interaction is direct and is involved in assembly and TRAPPIII ER-to-Golgi transport complex-dependent secretion of collagen. Post-translationally, prolines at the third position of the tripeptide repeating unit (G-X-Y) are hydroxylated in some or all of the chains. As to expression, expressed in bones.

The protein localises to the secreted. It localises to the extracellular space. It is found in the extracellular matrix. Its function is as follows. Type I collagen is a member of group I collagen (fibrillar forming collagen). This Megalonyx jeffersonii (Jefferson's ground sloth) protein is Collagen alpha-2(I) chain.